The primary structure comprises 372 residues: Alanine dehydrogenase (372 aa).

Substrate is bound by residues Arg15 and Lys75. His96 serves as the catalytic Proton donor/acceptor. NAD(+)-binding positions include Ser134, 178-179, Asp198, Ser220, 239-240, 266-269, Arg279, and 298-301; these read TA, VL, IAID, and VANM. The Proton donor/acceptor role is filled by Asp269.

It belongs to the AlaDH/PNT family. Homohexamer.

It localises to the cytoplasm. It carries out the reaction L-alanine + NAD(+) + H2O = pyruvate + NH4(+) + NADH + H(+). Its pathway is amino-acid degradation; L-alanine degradation via dehydrogenase pathway; NH(3) and pyruvate from L-alanine: step 1/1. Functionally, catalyzes the reversible reductive amination of pyruvate to L-alanine. A key factor in the assimilation of L-alanine as an energy source via the tricarboxylic acid cycle during sporulation. The polypeptide is Alanine dehydrogenase (ald) (Geobacillus stearothermophilus (Bacillus stearothermophilus)).